Consider the following 811-residue polypeptide: Protein kinase C-binding protein NELL2a (811 aa).

Positions 1 to 18 are cleaved as a signal peptide; sequence MAFLQLFVGLLCGAAVSA. Positions 54–225 constitute a Laminin G-like domain; it reads AFMFQGSSRS…TQCPDLNRTC (172 aa). N-linked (GlcNAc...) asparagine glycosylation is found at Asn222, Asn290, and Asn295. One can recognise a VWFC 1 domain in the interval 269 to 328; sequence RTCRVKDQIYREEQSWTDGCKNCTCSNGTVRCEKILCPPLDCPDGTTPAYVTGTCCKECQ. Residues 395–437 enclose the EGF-like 1 domain; the sequence is GHDFCAEENICSENSDCVNLDAGASCGCKNGFRPLRLDSAYCE. Intrachain disulfides connect Cys399-Cys411, Cys405-Cys420, and Cys422-Cys436. Positions 438, 439, and 441 each coordinate Ca(2+). An EGF-like 2; calcium-binding domain is found at 438-479; it reads DIDECAEGRHYCRENTECVNTAGSFMCVCHTGFIRIDDYSCT. 9 disulfides stabilise this stretch: Cys442-Cys455, Cys449-Cys464, Cys466-Cys478, Cys484-Cys497, Cys491-Cys506, Cys508-Cys519, Cys523-Cys533, Cys527-Cys539, and Cys541-Cys550. Residues Asn457, Thr458, and Ser461 each coordinate Ca(2+). One can recognise an EGF-like 3; calcium-binding domain in the interval 480–520; the sequence is EHDECASGQHDCDENALCFNTVGGHSCSCKPGYSGNGTVCR. N-linked (GlcNAc...) asparagine glycosylation occurs at Asn515. Positions 521-551 constitute an EGF-like 4 domain; the sequence is ALCDGRCLNGGSCASPNVCVCVQGFSGQNCE. Ca(2+)-binding residues include Asp553, Ile554, and Glu556. In terms of domain architecture, EGF-like 5; calcium-binding spans 553–592; the sequence is DIDECSEGLVQCAAHATCVNLPGWYHCECRDGYHDNEVFS. 3 cysteine pairs are disulfide-bonded: Cys557/Cys570, Cys564/Cys579, and Cys581/Cys598. 3 residues coordinate Ca(2+): Asn572, Leu573, and Trp576. Asp600, Ile601, and Glu603 together coordinate Ca(2+). The EGF-like 6; calcium-binding domain maps to 600–635; sequence DIDECRTGRSTCANDTVCFNLDGGFDCRCPHGHNCS. 3 cysteine pairs are disulfide-bonded: Cys604–Cys617, Cys611–Cys626, and Cys628–Cys634. N-linked (GlcNAc...) asparagine glycosylation is present at Asn613. Ca(2+) contacts are provided by Asn619, Leu620, and Gly623. Residue Asn633 is glycosylated (N-linked (GlcNAc...) asparagine). 2 consecutive VWFC domains span residues 636–691 and 696–754; these read GDCI…PECD and SQCL…PRCV.

As to quaternary structure, homotrimer.

It is found in the secreted. May regulate neuronal differentiation, polarization and axon guidance. The chain is Protein kinase C-binding protein NELL2a (nell2a) from Danio rerio (Zebrafish).